A 730-amino-acid polypeptide reads, in one-letter code: Heterogeneous nuclear ribonucleoprotein M (730 aa).

Over residues 1 to 13 (MAAGVEAAAEVAA) the composition is skewed to low complexity. Positions 1 to 62 (MAAGVEAAAE…NIKRGGNRFE (62 aa)) are disordered. A2 bears the N-acetylalanine mark. K17 is covalently cross-linked (Glycyl lysine isopeptide (Lys-Gly) (interchain with G-Cter in SUMO2)). S29 carries the phosphoserine modification. K37 is covalently cross-linked (Glycyl lysine isopeptide (Lys-Gly) (interchain with G-Cter in SUMO2)). Residues 38–50 (GEGERPAQNEKRK) show a composition bias toward basic and acidic residues. Residues K69 and K83 each participate in a glycyl lysine isopeptide (Lys-Gly) (interchain with G-Cter in SUMO2) cross-link. 2 consecutive RRM domains span residues 71-149 (YRAF…EDPD) and 204-281 (STVF…MDER). The residue at position 86 (S86) is a Phosphoserine. Glycyl lysine isopeptide (Lys-Gly) (interchain with G-Cter in SUMO2) cross-links involve residues K88 and K127. An N6-acetyllysine; alternate modification is found at K134. K134 participates in a covalent cross-link: Glycyl lysine isopeptide (Lys-Gly) (interchain with G-Cter in SUMO2); alternate. Glycyl lysine isopeptide (Lys-Gly) (interchain with G-Cter in SUMO2) cross-links involve residues K143 and K145. At S204 the chain carries Phosphoserine. A Glycyl lysine isopeptide (Lys-Gly) (interchain with G-Cter in SUMO2) cross-link involves residue K221. N6-acetyllysine; alternate is present on K277. Residue K277 forms a Glycyl lysine isopeptide (Lys-Gly) (interchain with G-Cter in SUMO2); alternate linkage. Glycyl lysine isopeptide (Lys-Gly) (interchain with G-Cter in SUMO2) cross-links involve residues K285 and K345. Residues S365 and S377 each carry the phosphoserine modification. Residues K381 and K388 each participate in a glycyl lysine isopeptide (Lys-Gly) (interchain with G-Cter in SUMO2) cross-link. S397 carries the post-translational modification Phosphoserine. 4 tandem repeats follow at residues 400–405 (GIERMG), 407–412 (GIDRLG), 415–420 (GMERMG), and 426–431 (GMDRVG). Residues 400–608 (GIERMGPGID…ALGAGIERMG (209 aa)) form a 27 X 6 AA repeats of [GEVSTPAN]-[ILMV]-[DE]-[RH]-[MLVI]-[GAV] region. S432 is modified (phosphoserine). Repeat copies occupy residues 433–438 (EIERMG), 440–445 (VMDRMG), and 446–451 (SVERMG). S452 is subject to Phosphoserine. 4 tandem repeats follow at residues 453 to 458 (GIERMG), 461 to 466 (GLDHMA), 468 to 473 (SIERMG), and 475 to 480 (TMERIG). Residue S468 is modified to Phosphoserine. S481 carries the phosphoserine modification. A run of 16 repeats spans residues 482 to 487 (GVERMG), 493 to 498 (GLERMA), 500 to 505 (PIDRVG), 507 to 512 (TIERMG), 514 to 519 (GVERMG), 521 to 526 (AIERMG), 528 to 533 (SMERMV), 540 to 545 (GLERMG), 547 to 552 (VMDRMA), 554 to 559 (GLERMG), 562 to 566 (NLERM), 567 to 572 (GLERMG), 575 to 579 (SLERM), 580 to 585 (GLERMG), 588 to 593 (SLERMG), and 603 to 608 (GIERMG). R496 carries the omega-N-methylarginine modification. Position 528 is a phosphoserine (S528). At S575 the chain carries Phosphoserine. A Phosphoserine modification is found at S588. Phosphoserine is present on residues S618, S633, and S637. Residue K651 forms a Glycyl lysine isopeptide (Lys-Gly) (interchain with G-Cter in SUMO2) linkage. In terms of domain architecture, RRM 3 spans 653-729 (CQIFVRNLPF…REIDVRIDRN (77 aa)). T665 is subject to Phosphothreonine. A Glycyl lysine isopeptide (Lys-Gly) (interchain with G-Cter in SUMO2) cross-link involves residue K667. At K672 the chain carries N6-acetyllysine. Glycyl lysine isopeptide (Lys-Gly) (interchain with G-Cter in SUMO2) cross-links involve residues K685 and K692. At K698 the chain carries N6-acetyllysine; alternate. Residue K698 forms a Glycyl lysine isopeptide (Lys-Gly) (interchain with G-Cter in SUMO2); alternate linkage. K698 participates in a covalent cross-link: Glycyl lysine isopeptide (Lys-Gly) (interchain with G-Cter in SUMO1); alternate. S701 is subject to Phosphoserine. A Glycyl lysine isopeptide (Lys-Gly) (interchain with G-Cter in SUMO2) cross-link involves residue K716.

Identified in the spliceosome C complex. Interacts with PPIA/CYPA. In terms of processing, sumoylated.

It localises to the nucleus. The protein resides in the nucleolus. In terms of biological role, pre-mRNA binding protein in vivo, binds avidly to poly(G) and poly(U) RNA homopolymers in vitro. Involved in splicing. Acts as a receptor for carcinoembryonic antigen in Kupffer cells, may initiate a series of signaling events leading to tyrosine phosphorylation of proteins and induction of IL-1 alpha, IL-6, IL-10 and tumor necrosis factor alpha cytokines. This Homo sapiens (Human) protein is Heterogeneous nuclear ribonucleoprotein M (HNRNPM).